A 261-amino-acid chain; its full sequence is Tryptophan synthase alpha chain (261 aa).

Residues Glu-47 and Asp-58 each act as proton acceptor in the active site.

The protein belongs to the TrpA family. In terms of assembly, tetramer of two alpha and two beta chains.

It carries out the reaction (1S,2R)-1-C-(indol-3-yl)glycerol 3-phosphate + L-serine = D-glyceraldehyde 3-phosphate + L-tryptophan + H2O. Its pathway is amino-acid biosynthesis; L-tryptophan biosynthesis; L-tryptophan from chorismate: step 5/5. In terms of biological role, the alpha subunit is responsible for the aldol cleavage of indoleglycerol phosphate to indole and glyceraldehyde 3-phosphate. The protein is Tryptophan synthase alpha chain of Neisseria meningitidis serogroup A / serotype 4A (strain DSM 15465 / Z2491).